The following is a 180-amino-acid chain: PLASMODESMATA CALLOSE-BINDING PROTEIN 5 (180 aa).

Residues 1–29 (MIMSLPQCSHLRLSILAATAAMLMVITTA) form the signal peptide. A disulfide bond links Cys-42 and Cys-105. Residues 126-151 (PSSKGANNGRLADDTSMGAGQADMSR) are disordered. Ser-157 carries the GPI-anchor amidated serine lipid modification. Residues 158–180 (SSWMVTFIGFGSLLTMTWIIHHL) constitute a propeptide, removed in mature form.

Post-translationally, contains two additional disulfide bonds.

Its subcellular location is the cell membrane. It is found in the cell junction. The protein resides in the plasmodesma. This chain is PLASMODESMATA CALLOSE-BINDING PROTEIN 5 (PDCB5), found in Arabidopsis thaliana (Mouse-ear cress).